The primary structure comprises 531 residues: tRNA(Ile)-lysidine synthase (531 aa).

Residue S32–S37 participates in ATP binding.

This sequence belongs to the tRNA(Ile)-lysidine synthase family.

The protein resides in the cytoplasm. It carries out the reaction cytidine(34) in tRNA(Ile2) + L-lysine + ATP = lysidine(34) in tRNA(Ile2) + AMP + diphosphate + H(+). In terms of biological role, ligates lysine onto the cytidine present at position 34 of the AUA codon-specific tRNA(Ile) that contains the anticodon CAU, in an ATP-dependent manner. Cytidine is converted to lysidine, thus changing the amino acid specificity of the tRNA from methionine to isoleucine. In Blochmanniella floridana, this protein is tRNA(Ile)-lysidine synthase.